Reading from the N-terminus, the 429-residue chain is Enolase (429 aa).

Position 164 (Gln164) interacts with (2R)-2-phosphoglycerate. Glu206 acts as the Proton donor in catalysis. Residues Asp243, Glu286, and Asp313 each coordinate Mg(2+). Residues Lys338, Arg367, Ser368, and Lys389 each coordinate (2R)-2-phosphoglycerate. Residue Lys338 is the Proton acceptor of the active site.

Belongs to the enolase family. As to quaternary structure, homooctamer. Forms a ring-shaped particle. Requires Mg(2+) as cofactor.

The protein resides in the cytoplasm. It is found in the secreted. It localises to the cell surface. The catalysed reaction is (2R)-2-phosphoglycerate = phosphoenolpyruvate + H2O. The protein operates within carbohydrate degradation; glycolysis; pyruvate from D-glyceraldehyde 3-phosphate: step 4/5. With respect to regulation, inhibited by fluoride and phosphate. Catalyzes the reversible conversion of 2-phosphoglycerate (2-PG) into phosphoenolpyruvate (PEP). It is essential for the degradation of carbohydrates via glycolysis. This Thermotoga maritima (strain ATCC 43589 / DSM 3109 / JCM 10099 / NBRC 100826 / MSB8) protein is Enolase.